The sequence spans 650 residues: Epithelial sodium channel subunit beta (650 aa).

Residues 1–95 lie on the Cytoplasmic side of the membrane; it reads MLLHINPAYL…IICEGPKKKA (95 aa). A helical transmembrane segment spans residues 96 to 116; that stretch reads MWFLLTLLFTALVCWQWGIFI. At 117–542 the chain is on the extracellular side; the sequence is RTYLSWEVSV…GGQFGFWMGG (426 aa). 5 disulfide bridges follow: Cys143/Cys317, Cys229/Cys234, Cys241/Cys248, Cys294/Cys301, and Cys406/Cys458. Residue Asn244 is glycosylated (N-linked (GlcNAc...) asparagine). Asn305 carries an N-linked (GlcNAc...) asparagine glycan. A helical transmembrane segment spans residues 543-563; that stretch reads SVLCLIEFGEIIIDFVWITII. Residues 564-650 lie on the Cytoplasmic side of the membrane; it reads KLVALAKSLR…IESDSEGDAI (87 aa). The tract at residues 600–650 is disordered; it reads FQPDTAPRSPNTGPYPNEQALPIPGTPPPNYDSLRLQPLDVIESDSEGDAI. The short motif at 626–630 is the PY motif; recruits WW domain-containing proteins and is thereby required for ubiquitination and inhibition of the channel by NEDD4 and NEDD4L element; it reads PPPNY. The segment covering 641 to 650 has biased composition (acidic residues); that stretch reads IESDSEGDAI. A phosphoserine mark is found at Ser643 and Ser645.

It belongs to the amiloride-sensitive sodium channel (TC 1.A.6) family. SCNN1B subfamily. Component of the heterotrimeric epithelial sodium channel (ENaC) composed of an alpha/SCNN1A, a beta/SCNN1B and a gamma/SCNN1G subunit. An additional delta/SCNN1D subunit can replace the alpha/SCNN1A subunit to form an alternative channel with specific properties. Interacts with WWP1 (via WW domains). Interacts with WWP2 (via WW domains); inhibits the channel. Interacts with the full-length immature form of PCSK9 (pro-PCSK9). Interacts (N-glycosylated) with BPIFA1; the interaction is direct and inhibits the proteolytic processing of SCNN1A and SCNN1G and the activation of ENaC. Post-translationally, ubiquitinated. Can be ubiquitinated at multiple sites and undergo monoubiquitination and polyubiquitination. Ubiquitination by NEDD4 or NEDD4L inhibits the ENaC channel through endocytosis, intracellular retention and degradation of its individual subunits. However, some studies could not confirm the ubiquitination of this subunit of the ENaC. In terms of processing, phosphorylated on serine and threonine residues. Aldosterone and insulin increase the basal level of phosphorylation. N-glycosylated. N-glycosylation is required for interaction with BPIFA1.

It localises to the apical cell membrane. It is found in the cytoplasmic vesicle membrane. It carries out the reaction Na(+)(in) = Na(+)(out). Its activity is regulated as follows. Originally identified and characterized by its inhibition by the diuretic drug amiloride. Functionally, this is one of the three pore-forming subunits of the heterotrimeric epithelial sodium channel (ENaC), a critical regulator of sodium balance and fluid homeostasis. ENaC operates in epithelial tissues, where it mediates the electrodiffusion of sodium ions from extracellular fluid through the apical membrane of cells, with water following osmotically. It plays a key role in maintaining sodium homeostasis through electrogenic sodium reabsorption in the kidneys. Additionally, ENaC is essential for airway surface liquid homeostasis, which is crucial for proper mucus clearance. This chain is Epithelial sodium channel subunit beta, found in Pan troglodytes (Chimpanzee).